Consider the following 269-residue polypeptide: 3-methyl-2-oxobutanoate hydroxymethyltransferase (269 aa).

2 residues coordinate Mg(2+): aspartate 49 and aspartate 88. 3-methyl-2-oxobutanoate is bound by residues 49–50 (DS), aspartate 88, and lysine 118. Glutamate 120 serves as a coordination point for Mg(2+). Glutamate 186 (proton acceptor) is an active-site residue.

The protein belongs to the PanB family. Homodecamer; pentamer of dimers. Mg(2+) is required as a cofactor.

Its subcellular location is the cytoplasm. It catalyses the reaction 3-methyl-2-oxobutanoate + (6R)-5,10-methylene-5,6,7,8-tetrahydrofolate + H2O = 2-dehydropantoate + (6S)-5,6,7,8-tetrahydrofolate. Its pathway is cofactor biosynthesis; (R)-pantothenate biosynthesis; (R)-pantoate from 3-methyl-2-oxobutanoate: step 1/2. Functionally, catalyzes the reversible reaction in which hydroxymethyl group from 5,10-methylenetetrahydrofolate is transferred onto alpha-ketoisovalerate to form ketopantoate. This Pelobacter propionicus (strain DSM 2379 / NBRC 103807 / OttBd1) protein is 3-methyl-2-oxobutanoate hydroxymethyltransferase.